A 243-amino-acid polypeptide reads, in one-letter code: Probable transcriptional regulatory protein BP2308 (243 aa).

The interval 1–21 is disordered; the sequence is MAGHSKWANIQHRKGRQDAKR.

This sequence belongs to the TACO1 family.

Its subcellular location is the cytoplasm. In Bordetella pertussis (strain Tohama I / ATCC BAA-589 / NCTC 13251), this protein is Probable transcriptional regulatory protein BP2308.